Reading from the N-terminus, the 256-residue chain is N-acetylglucosaminyldiphosphoundecaprenol N-acetyl-beta-D-mannosaminyltransferase (256 aa).

It belongs to the glycosyltransferase 26 family. TagA/TarA subfamily.

The catalysed reaction is UDP-N-acetyl-alpha-D-mannosamine + N-acetyl-alpha-D-glucosaminyl-di-trans,octa-cis-undecaprenyl diphosphate = N-acetyl-beta-D-mannosaminyl-(1-&gt;4)-N-acetyl-alpha-D-glucosaminyl di-trans,octa-cis-undecaprenyl diphosphate + UDP + H(+). The protein operates within cell wall biogenesis; poly(glycerol phosphate) teichoic acid biosynthesis. In terms of biological role, catalyzes the conversion of GlcNAc-PP-undecaprenol into ManNAc-GlcNAc-PP-undecaprenol, the first committed lipid intermediate in the de novo synthesis of teichoic acid. The polypeptide is N-acetylglucosaminyldiphosphoundecaprenol N-acetyl-beta-D-mannosaminyltransferase (Bacillus subtilis (strain 168)).